The chain runs to 287 residues: Cyclopropane mycolic acid synthase MmaA2 (287 aa).

Residues 33–34 (YS), 72–74 (GCG), 94–99 (TLSKNQ), 123–124 (WE), and isoleucine 136 each bind S-adenosyl-L-methionine. Cysteine 269 is an active-site residue.

The protein belongs to the CFA/CMAS family.

The enzyme catalyses a 1-acyl-2-(9Z)-enoyl-sn-glycero-3-phospholipid + S-adenosyl-L-methionine = a 1-acyl-2-(9-cyclopronane)-acyl-sn-glycero-3-phospholipid + S-adenosyl-L-homocysteine + H(+). The protein operates within lipid metabolism; mycolic acid biosynthesis. In terms of biological role, catalyzes the conversion of a double bond to a cis cyclopropane ring at the distal position of an alpha mycolic acid via the transfer of a methylene group from S-adenosyl-L-methionine. MmaA2 also catalyzes the biosynthesis of the cis-cyclopropanated methoxymycolates. Cyclopropanated mycolic acids are key factors participating in cell envelope permeability, host immunomodulation and persistence. The chain is Cyclopropane mycolic acid synthase MmaA2 (cmaC) from Mycobacterium bovis (strain ATCC BAA-935 / AF2122/97).